The following is a 478-amino-acid chain: UDP-glycosyltransferase 90A1 (478 aa).

UDP-alpha-D-glucose-binding positions include Thr-289, 343–345 (VDQ), 360–368 (HCGWNSAQE), and 382–385 (MAEQ).

The protein belongs to the UDP-glycosyltransferase family.

The polypeptide is UDP-glycosyltransferase 90A1 (UGT90A1) (Arabidopsis thaliana (Mouse-ear cress)).